The sequence spans 495 residues: ATP synthase subunit beta, chloroplastic (495 aa).

172–179 (GGAGVGKT) contributes to the ATP binding site.

Belongs to the ATPase alpha/beta chains family. As to quaternary structure, F-type ATPases have 2 components, CF(1) - the catalytic core - and CF(0) - the membrane proton channel. CF(1) has five subunits: alpha(3), beta(3), gamma(1), delta(1), epsilon(1). CF(0) has four main subunits: a(1), b(1), b'(1) and c(9-12).

It is found in the plastid. The protein localises to the chloroplast thylakoid membrane. It catalyses the reaction ATP + H2O + 4 H(+)(in) = ADP + phosphate + 5 H(+)(out). Its function is as follows. Produces ATP from ADP in the presence of a proton gradient across the membrane. The catalytic sites are hosted primarily by the beta subunits. This is ATP synthase subunit beta, chloroplastic from Hyacinthus orientalis (Common hyacinth).